We begin with the raw amino-acid sequence, 478 residues long: METARGRVLSVASECVPLLKTGGLADVVGALPGALAAEGWEMRVLMPCYRPLRWRLEQMEEVFSEEDLFGGRGRVMAGEVAGRRMLLLDAPHLYDREGGPYAGPWGDWGDNAQRFAALSWIAARIAREGLSDGWRPEVLHAHDWQAGFAPAYLAYWGSGGVRSVLTVHNIAFQGWAPAALLPSLRLPASEFHPAALEYYGGLSSLKAGLVTADHITTVSPTYACELMRPEFGMGLQGVIAARAGQVSGILNGVDTDIWSPEAEERPYTARSLKAKAENRAVLSGAFKLDVPGPLAILVSRLTYQKGIDLIPEVLPDFIAAGGGLAVLGTGDAALEGAMRELEVRFSGRVGVRIGYDEGLSHLMFAGGDAVLVPSRFEPCGLTQMYGLRYGAIPVVALTGGLADTIINANPAALTAGCATGLTFHPTEPPAFAEALRRLIHLYADHALWEKVQKNAMRHPVGWQTSAAAYAALYRELVA.

Lys20 is an ADP-alpha-D-glucose binding site.

Belongs to the glycosyltransferase 1 family. Bacterial/plant glycogen synthase subfamily.

The enzyme catalyses [(1-&gt;4)-alpha-D-glucosyl](n) + ADP-alpha-D-glucose = [(1-&gt;4)-alpha-D-glucosyl](n+1) + ADP + H(+). It participates in glycan biosynthesis; glycogen biosynthesis. Synthesizes alpha-1,4-glucan chains using ADP-glucose. This is Glycogen synthase from Cereibacter sphaeroides (strain ATCC 17025 / ATH 2.4.3) (Rhodobacter sphaeroides).